The following is a 299-amino-acid chain: Polyamine aminopropyltransferase (299 aa).

The 247-residue stretch at Ile6–Gln252 folds into the PABS domain. S-methyl-5'-thioadenosine-binding positions include Gln36, Glu120, and Asp147–Ala148. Asp168 (proton acceptor) is an active-site residue.

This sequence belongs to the spermidine/spermine synthase family. As to quaternary structure, homodimer or homotetramer.

It localises to the cytoplasm. It catalyses the reaction S-adenosyl 3-(methylsulfanyl)propylamine + putrescine = S-methyl-5'-thioadenosine + spermidine + H(+). Its pathway is amine and polyamine biosynthesis; spermidine biosynthesis; spermidine from putrescine: step 1/1. Functionally, catalyzes the irreversible transfer of a propylamine group from the amino donor S-adenosylmethioninamine (decarboxy-AdoMet) to putrescine (1,4-diaminobutane) to yield spermidine. The chain is Polyamine aminopropyltransferase from Vibrio vulnificus (strain CMCP6).